Consider the following 233-residue polypeptide: Adenosine 5'-phosphosulfate reductase 1 (233 aa).

Residues C120, C121, C203, and C206 each coordinate [4Fe-4S] cluster. Catalysis depends on C229, which acts as the Nucleophile; cysteine thiosulfonate intermediate.

This sequence belongs to the PAPS reductase family. CysH subfamily. The cofactor is [4Fe-4S] cluster.

It localises to the cytoplasm. It catalyses the reaction [thioredoxin]-disulfide + sulfite + AMP + 2 H(+) = adenosine 5'-phosphosulfate + [thioredoxin]-dithiol. Its pathway is sulfur metabolism; hydrogen sulfide biosynthesis; sulfite from sulfate. In terms of biological role, catalyzes the formation of sulfite from adenosine 5'-phosphosulfate (APS) using thioredoxin as an electron donor. The sequence is that of Adenosine 5'-phosphosulfate reductase 1 (cysH) from Bacillus subtilis (strain 168).